The following is a 633-amino-acid chain: Threonine--tRNA ligase (633 aa).

The TGS domain occupies 1-61 (MPAIRLPDGS…DHDVDLAIVT (61 aa)). The tract at residues 242–533 (DHRKLGRQLD…LIEHHAGAMP (292 aa)) is catalytic. The Zn(2+) site is built by cysteine 333, histidine 384, and histidine 510.

Belongs to the class-II aminoacyl-tRNA synthetase family. In terms of assembly, homodimer. Zn(2+) is required as a cofactor.

The protein resides in the cytoplasm. The enzyme catalyses tRNA(Thr) + L-threonine + ATP = L-threonyl-tRNA(Thr) + AMP + diphosphate + H(+). Functionally, catalyzes the attachment of threonine to tRNA(Thr) in a two-step reaction: L-threonine is first activated by ATP to form Thr-AMP and then transferred to the acceptor end of tRNA(Thr). Also edits incorrectly charged L-seryl-tRNA(Thr). The polypeptide is Threonine--tRNA ligase (Laribacter hongkongensis (strain HLHK9)).